Consider the following 443-residue polypeptide: RILP-like protein homolog (443 aa).

One can recognise an RH1 domain in the interval 8 to 96; that stretch reads EMGEMVLDAI…ESEKLEKAEF (89 aa). Positions 59-315 form a coiled coil; it reads LELLEALATK…TLNEQLAELK (257 aa). Positions 282–401 constitute an RH2 domain; sequence RPRYTTRELK…KSSESGIRKF (120 aa). The interval 311 to 394 is disordered; it reads LAELKPPSQA…PDDAPWKKSS (84 aa). Positions 332–355 are enriched in acidic residues; the sequence is DDSDEDDDGHVADNDDDDDEEEAA. The span at 356–368 shows a compositional bias: low complexity; it reads AEANELEPPAAGE.

It belongs to the RILPL family. In terms of assembly, interacts with Arl8 (in GTP-bound form).

It is found in the lysosome membrane. Its function is as follows. May have a role in lysosome distribution by interacting with Arl8. This is RILP-like protein homolog from Drosophila melanogaster (Fruit fly).